We begin with the raw amino-acid sequence, 263 residues long: Pollen allergen Lol p 1 (263 aa).

A signal peptide spans 1–23; the sequence is MASSSSVLLVVALFAVFLGSAHG. N32 carries N-linked (GlcNAc...) asparagine glycosylation. An Expansin-like EG45 domain is found at 61–167; that stretch reads GGACGYKNVD…RRVKCKYPDD (107 aa). One can recognise an Expansin-like CBD domain in the interval 181–262; it reads NYLAILVKYV…GWKADTSYSA (82 aa).

The protein belongs to the expansin family. Expansin B subfamily.

The protein localises to the secreted. This is Pollen allergen Lol p 1 from Lolium perenne (Perennial ryegrass).